A 465-amino-acid polypeptide reads, in one-letter code: Gamma-aminobutyric acid receptor subunit rho-2 (465 aa).

Residues Met-1–Ser-20 form the signal peptide. The Extracellular portion of the chain corresponds to Arg-21–His-260. Arg-105 provides a ligand contact to 4-aminobutanoate. A glycan (N-linked (GlcNAc...) asparagine) is linked at Asn-120. Ser-169 contributes to the 4-aminobutanoate binding site. A disulfide bond links Cys-178 and Cys-192. Glu-197 lines the 4-aminobutanoate pocket. Residue Asn-254 is glycosylated (N-linked (GlcNAc...) asparagine). Residues Ile-261–Val-281 traverse the membrane as a helical segment. At Ser-282–Arg-293 the chain is on the cytoplasmic side. The helical transmembrane segment at Val-294–Ser-314 threads the bilayer. Topologically, residues Met-315–Asp-325 are extracellular. A helical membrane pass occupies residues Ile-326–Asn-346. The Cytoplasmic portion of the chain corresponds to Tyr-347–Lys-443. The helical transmembrane segment at Tyr-444–Phe-464 threads the bilayer. Residue Ser-465 is a topological domain, extracellular.

This sequence belongs to the ligand-gated ion channel (TC 1.A.9) family. Gamma-aminobutyric acid receptor (TC 1.A.9.5) subfamily. GABRR2 sub-subfamily. As to quaternary structure, three rho subunits (rho-1/GBRR1, rho-2/GBRR2 and rho-3/GBRR3) coassemble either to form functional homopentamers or heteropentamers. Rho-2 is unable to form a functional homopentamer. Interacts with SQSTM1. Expressed in the cerebellum.

The protein resides in the postsynaptic cell membrane. It is found in the cell membrane. The catalysed reaction is chloride(in) = chloride(out). Rho subunit of the pentameric ligand-gated chloride channels responsible for mediating the effects of gamma-aminobutyric acid (GABA), the major inhibitory neurotransmitter in the brain. Rho-containing GABA-gated chloride channels are a subclass of GABA(A) receptors (GABAARs) entirely composed of rho subunits, where GABA molecules bind at the rho intersubunit interfaces. When activated by GABA, rho-GABAARs selectively allow the flow of chloride anions across the cell membrane down their electrochemical gradient. Rho-2 GABAARs may contribute to the regulation of glial development in the cerebellum by controlling extrasynaptic transmission. Rho-2 GABAARs are also involved in neuronal tonic (extrasynaptic) and phasic (synaptic) transmission in the Purkinje neurons of the cerebellum. Rho-2 GABAARs expressed in retina may play a role in retinal neurotransmission. The sequence is that of Gamma-aminobutyric acid receptor subunit rho-2 from Mus musculus (Mouse).